A 191-amino-acid chain; its full sequence is Cyclin-dependent kinase inhibitor 1 (191 aa).

A disordered region spans residues 62 to 81 (LIHLEEEDKDGDTETSTYRR). The interval 162–191 (QLKEKFKKKYNFDFEKEKPLEGRYEWVKLE) is required for inhibitory function and interaction with CDK kinase complexes.

This sequence belongs to the CDI family. ICK/KRP subfamily. As to quaternary structure, specifically interacts with CDKA-1, but not with CDKB1-1. Interacts with CYCD2-1 and CYCD3-1. Ubiquitinated independently by RKP and SCF (SKP1-CUL1-FBL5/SKP2B) protein ligase complex, leading to proteasomal degradation. As to expression, expressed at low levels in roots, stems, leaves and flowers.

The protein resides in the nucleus. Its subcellular location is the nucleoplasm. In terms of biological role, binds and inhibits CYCD2-1/CDKA-1 kinase complex activity. Regulates cell division which is crucial for plant growth, development and morphogenesis. Functions in turning cells from a mitotic to an endoreplicating cell cycle mode. Acts cell- and non-cell-autonomously to regulate endoreduplication by allowing S phase progression, but blocking entry into mitosis. Keeps on the one hand the plant cell cycle locally controlled, and on the other hand provides a possibility of linking cell cycle control in single cells with the supracellular organization of a tissue or an organ. May target specifically CDKA-1. This is Cyclin-dependent kinase inhibitor 1 (KRP1) from Arabidopsis thaliana (Mouse-ear cress).